A 335-amino-acid chain; its full sequence is Deoxyhypusine hydroxylase (335 aa).

5 HEAT-like PBS-type repeats span residues 74-100 (LKHE…VLED), 107-133 (CRHE…LRDD), 203-233 (KRYR…LAEG), 241-267 (FRHE…TLSD), and 274-301 (VRHE…FVND). His-76, Glu-77, His-109, and Glu-110 together coordinate Fe cation. Residues His-243, Glu-244, His-276, and Glu-277 each contribute to the Fe cation site.

It belongs to the deoxyhypusine hydroxylase family. Fe(2+) serves as cofactor.

The protein resides in the cytoplasm. It localises to the nucleus. The enzyme catalyses [eIF5A protein]-deoxyhypusine + AH2 + O2 = [eIF5A protein]-hypusine + A + H2O. It participates in protein modification; eIF5A hypusination. Functionally, catalyzes the hydroxylation of the N(6)-(4-aminobutyl)-L-lysine intermediate to form hypusine, an essential post-translational modification only found in mature eIF-5A factor. This chain is Deoxyhypusine hydroxylase, found in Coccidioides immitis (strain RS) (Valley fever fungus).